The following is a 211-amino-acid chain: ATP phosphoribosyltransferase (211 aa).

The protein belongs to the ATP phosphoribosyltransferase family. Short subfamily. As to quaternary structure, heteromultimer composed of HisG and HisZ subunits.

Its subcellular location is the cytoplasm. The enzyme catalyses 1-(5-phospho-beta-D-ribosyl)-ATP + diphosphate = 5-phospho-alpha-D-ribose 1-diphosphate + ATP. It participates in amino-acid biosynthesis; L-histidine biosynthesis; L-histidine from 5-phospho-alpha-D-ribose 1-diphosphate: step 1/9. Its function is as follows. Catalyzes the condensation of ATP and 5-phosphoribose 1-diphosphate to form N'-(5'-phosphoribosyl)-ATP (PR-ATP). Has a crucial role in the pathway because the rate of histidine biosynthesis seems to be controlled primarily by regulation of HisG enzymatic activity. The polypeptide is ATP phosphoribosyltransferase (Bacillus cereus (strain 03BB102)).